A 336-amino-acid polypeptide reads, in one-letter code: Nucleoid-associated protein Spro_3255 (336 aa).

Belongs to the YejK family.

Its subcellular location is the cytoplasm. The protein localises to the nucleoid. This chain is Nucleoid-associated protein Spro_3255, found in Serratia proteamaculans (strain 568).